The following is a 419-amino-acid chain: Serine hydroxymethyltransferase (419 aa).

(6S)-5,6,7,8-tetrahydrofolate contacts are provided by residues L121 and 125 to 127 (GHL). K230 is subject to N6-(pyridoxal phosphate)lysine. 355–357 (SPF) serves as a coordination point for (6S)-5,6,7,8-tetrahydrofolate.

It belongs to the SHMT family. As to quaternary structure, homodimer. Pyridoxal 5'-phosphate is required as a cofactor.

The protein localises to the cytoplasm. The catalysed reaction is (6R)-5,10-methylene-5,6,7,8-tetrahydrofolate + glycine + H2O = (6S)-5,6,7,8-tetrahydrofolate + L-serine. It participates in one-carbon metabolism; tetrahydrofolate interconversion. Its pathway is amino-acid biosynthesis; glycine biosynthesis; glycine from L-serine: step 1/1. Catalyzes the reversible interconversion of serine and glycine with tetrahydrofolate (THF) serving as the one-carbon carrier. This reaction serves as the major source of one-carbon groups required for the biosynthesis of purines, thymidylate, methionine, and other important biomolecules. Also exhibits THF-independent aldolase activity toward beta-hydroxyamino acids, producing glycine and aldehydes, via a retro-aldol mechanism. This Streptococcus uberis (strain ATCC BAA-854 / 0140J) protein is Serine hydroxymethyltransferase.